A 62-amino-acid chain; its full sequence is Glucagon (62 aa).

Belongs to the glucagon family.

It is found in the secreted. In terms of biological role, promotes hydrolysis of glycogen and lipids, and raises the blood sugar level. The chain is Glucagon (gcg) from Scyliorhinus canicula (Small-spotted catshark).